The chain runs to 259 residues: Small ribosomal subunit protein uS2 (259 aa).

It belongs to the universal ribosomal protein uS2 family.

The sequence is that of Small ribosomal subunit protein uS2 from Dinoroseobacter shibae (strain DSM 16493 / NCIMB 14021 / DFL 12).